Consider the following 525-residue polypeptide: Glutamate synthase large subunit-like protein YerD (525 aa).

A helical transmembrane segment spans residues 4–24; that stretch reads IIIALIAFIIGIIAIPIVLFA.

Belongs to the glutamate synthase family.

It localises to the cell membrane. In Bacillus subtilis (strain 168), this protein is Glutamate synthase large subunit-like protein YerD (yerD).